A 100-amino-acid polypeptide reads, in one-letter code: Large ribosomal subunit protein bL21 (100 aa).

Belongs to the bacterial ribosomal protein bL21 family. In terms of assembly, part of the 50S ribosomal subunit. Contacts protein L20.

This protein binds to 23S rRNA in the presence of protein L20. The polypeptide is Large ribosomal subunit protein bL21 (Wolbachia sp. subsp. Drosophila simulans (strain wRi)).